The sequence spans 485 residues: Ribosomal protein uS12 methylthiotransferase RimO (485 aa).

The 117-residue stretch at 19 to 135 (VKVGFISLGC…IGEVVAGILA (117 aa)) folds into the MTTase N-terminal domain. [4Fe-4S] cluster-binding residues include Cys-28, Cys-64, Cys-98, Cys-172, Cys-176, and Cys-179. Residues 158–387 (ATPGYTAYLK…MEVQQEIARR (230 aa)) enclose the Radical SAM core domain. The TRAM domain occupies 390 to 461 (QLQVGRELEV…DYDLLGEATE (72 aa)).

This sequence belongs to the methylthiotransferase family. RimO subfamily. The cofactor is [4Fe-4S] cluster.

It is found in the cytoplasm. It carries out the reaction L-aspartate(89)-[ribosomal protein uS12]-hydrogen + (sulfur carrier)-SH + AH2 + 2 S-adenosyl-L-methionine = 3-methylsulfanyl-L-aspartate(89)-[ribosomal protein uS12]-hydrogen + (sulfur carrier)-H + 5'-deoxyadenosine + L-methionine + A + S-adenosyl-L-homocysteine + 2 H(+). In terms of biological role, catalyzes the methylthiolation of an aspartic acid residue of ribosomal protein uS12. This chain is Ribosomal protein uS12 methylthiotransferase RimO, found in Symbiobacterium thermophilum (strain DSM 24528 / JCM 14929 / IAM 14863 / T).